We begin with the raw amino-acid sequence, 535 residues long: Unconventional prefoldin RPB5 interactor 1 (535 aa).

The residue at position 1 (methionine 1) is an N-acetylmethionine. 4 disordered regions span residues 1–23 (MEAP…PALV), 223–330 (LLGE…VGDN), 352–383 (KNTT…QELP), and 412–431 (SRSR…AAEF). The span at 7–18 (ETPPDPSPPSAP) shows a compositional bias: pro residues. Polar residues-rich tracts occupy residues 253 to 265 (TNVN…TDSH) and 276 to 296 (EPFS…SSSY). Over residues 299-320 (DDDDDDDDDDDDDNIDDDDGDN) the composition is skewed to acidic residues. At serine 372 the chain carries Phosphoserine; by RPS6KB1. Threonine 373 bears the Phosphothreonine mark. Residues 417 to 427 (NSVCSDTSESS) show a composition bias toward polar residues. The residue at position 442 (serine 442) is a Phosphoserine.

Belongs to the RNA polymerase II subunit 5-mediating protein family. In terms of assembly, homodimer. Component of the PAQosome complex which is responsible for the biogenesis of several protein complexes and which consists of R2TP complex members RUVBL1, RUVBL2, RPAP3 and PIH1D1, URI complex members PFDN2, PFDN6, PDRG1, UXT and URI1 as well as ASDURF, POLR2E and DNAAF10/WDR92. Interacts with POLR2E/RPB5, RUVBL2 and RUVBL1. Interacts with PFDN2, PFDN4 and STAP1; the interactions are phosphorylation-dependent and occur in a growth-dependent manner in the mitochondrion. Interacts with UXT. Interacts with PPP1CC; the interaction is phosphorylation-dependent and occurs in a growth factor-dependent manner. Interacts (via the middle C-terminal region) with GTF2F1 and GTF2F2. Interacts with DMAP1. Interacts with TSC1 and TSC2. Interacts with PRPF8 and EFTUD2 in a ZNHIT2-dependent manner. Phosphorylated. Phosphorylation occurs essentially on serine residues. Phosphorylation occurs in response to androgen treatment in prostate cancer cells in a mTOR-dependent manner. Phosphorylated; hyperhosphorylated in mitochondria in a mTORC-dependent signaling pathway. Phosphorylated at Ser-372 by RPS6KB1 in a growth factor- and rapamycin-dependent manner. S6K1-mediated mitochondrial phosphorylation at Ser-372 disrupts the URI1-PPP1CC complex in the mitochondrion, relieves PPP1CC phosphatase inhibition activity and hence engages a negative feedback diminishing RPS6KB1 kinase activity, preventing sustained S6K1-dependent signaling. Ubiquitous. Expressed in ovarian cancers (at protein level). Expressed strongly in skeletal muscle. Expressed weakly in brain, heart, pancreas and in prostate epithelial cells.

It localises to the nucleus. It is found in the cytoplasm. Its subcellular location is the mitochondrion. The protein resides in the cell projection. The protein localises to the dendrite. Involved in gene transcription regulation. Acts as a transcriptional repressor in concert with the corepressor UXT to regulate androgen receptor (AR) transcription. May act as a tumor suppressor to repress AR-mediated gene transcription and to inhibit anchorage-independent growth in prostate cancer cells. Required for cell survival in ovarian cancer cells. Together with UXT, associates with chromatin to the NKX3-1 promoter region. Antagonizes transcriptional modulation via hepatitis B virus X protein. In terms of biological role, plays a central role in maintaining S6K1 signaling and BAD phosphorylation under normal growth conditions thereby protecting cells from potential deleterious effects of sustained S6K1 signaling. The URI1-PPP1CC complex acts as a central component of a negative feedback mechanism that counteracts excessive S6K1 survival signaling to BAD in response to growth factors. Mediates inhibition of PPP1CC phosphatase activity in mitochondria. Coordinates the regulation of nutrient-sensitive gene expression availability in a mTOR-dependent manner. Seems to be a scaffolding protein able to assemble a prefoldin-like complex that contains PFDs and proteins with roles in transcription and ubiquitination. The protein is Unconventional prefoldin RPB5 interactor 1 (URI1) of Homo sapiens (Human).